The primary structure comprises 369 residues: Peptide chain release factor 2 (369 aa).

Glutamine 249 carries the post-translational modification N5-methylglutamine.

It belongs to the prokaryotic/mitochondrial release factor family. Methylated by PrmC. Methylation increases the termination efficiency of RF2.

The protein localises to the cytoplasm. Peptide chain release factor 2 directs the termination of translation in response to the peptide chain termination codons UGA and UAA. The sequence is that of Peptide chain release factor 2 from Corynebacterium diphtheriae (strain ATCC 700971 / NCTC 13129 / Biotype gravis).